The primary structure comprises 730 residues: Regulatory factor X 4 (730 aa).

Positions 30–41 (YSSHTSLGNISN) are enriched in polar residues. A disordered region spans residues 30-59 (YSSHTSLGNISNDETDEEKENRASKPHSTP). The RFX-type winged-helix DNA-binding region spans 61–136 (TLQWLGENYE…YHYYGIAVKE (76 aa)). The segment at 500–532 (EPAISTPSPVPFSPAASSSSVEIPSATSPVSNQ) is disordered. A compositionally biased stretch (low complexity) spans 512-528 (SPAASSSSVEIPSATSP).

The protein belongs to the RFX family.

The protein localises to the nucleus. In terms of biological role, required for neural tube ciliogenesis during embryogenesis. This chain is Regulatory factor X 4, found in Xenopus laevis (African clawed frog).